Here is a 1490-residue protein sequence, read N- to C-terminus: ABC transporter CDR4 (1490 aa).

Residues 1-12 show a composition bias toward polar residues; it reads MADADTSSNSSK. Disordered stretches follow at residues 1–26 and 53–75; these read MADA…GTYQ and LKRQ…LSGK. The Cytoplasmic segment spans residues 1–516; that stretch reads MADADTSSNS…NILRIKGNPS (516 aa). Residues 58-67 show a composition bias toward basic and acidic residues; that stretch reads SRQESQKSNE. Residues 151–407 enclose the ABC transporter 1 domain; sequence PKYLSLFFRE…FIDMGYECPQ (257 aa). Helical transmembrane passes span 517–537, 551–571, 601–621, 626–646, 659–679, and 767–787; these read IHLF…SIFY, AALF…IFSL, LPTK…MVNF, GNFF…SHIF, AMTP…FVIP, and FGIV…LCEI. Topologically, residues 788-1182 are cytoplasmic; sequence NKGAMQKGEI…VFEQNWRTPS (395 aa). The ABC transporter 2 domain occupies 846-1090; that stretch reads FFWRDLTYQV…LINYFEKYGA (245 aa). ATP is bound at residue 882 to 889; sequence GASGAGKT. The next 3 helical transmembrane spans lie at 1183–1203, 1217–1237, and 1268–1288; these read YLYS…FSFY, FSVF…LPTF, and IPWN…PVGL. An N-linked (GlcNAc...) asparagine glycan is attached at Asn-1291. 3 helical membrane-spanning segments follow: residues 1304–1324, 1333–1353, and 1370–1390; these read FMWF…QLCI, AANL…VLVT, and FTYL…VTCA. Asn-1424 carries an N-linked (GlcNAc...) asparagine glycan. Residues 1455–1475 traverse the membrane as a helical segment; the sequence is IGIYIAFIGINIIGTFILYWF.

Belongs to the ABC transporter superfamily. ABCG family. PDR (TC 3.A.1.205) subfamily.

The protein localises to the membrane. In Candida albicans (Yeast), this protein is ABC transporter CDR4 (CDR4).